Consider the following 447-residue polypeptide: Argininosuccinate synthase (447 aa).

ATP-binding positions include 20–28 (AFSGGLDTS) and alanine 46. L-citrulline is bound at residue tyrosine 102. ATP contacts are provided by glycine 132 and threonine 134. Positions 134, 138, and 139 each coordinate L-aspartate. Asparagine 138 lines the L-citrulline pocket. Aspartate 139 contributes to the ATP binding site. Residues arginine 142 and serine 195 each coordinate L-citrulline. Aspartate 197 is an ATP binding site. Threonine 204, glutamate 206, and glutamate 283 together coordinate L-citrulline.

Belongs to the argininosuccinate synthase family. Type 2 subfamily. Homotetramer.

The protein resides in the cytoplasm. It catalyses the reaction L-citrulline + L-aspartate + ATP = 2-(N(omega)-L-arginino)succinate + AMP + diphosphate + H(+). It participates in amino-acid biosynthesis; L-arginine biosynthesis; L-arginine from L-ornithine and carbamoyl phosphate: step 2/3. The protein is Argininosuccinate synthase (argG) of Neisseria meningitidis serogroup A / serotype 4A (strain DSM 15465 / Z2491).